The primary structure comprises 289 residues: Homeobox protein Nkx-2.6 (289 aa).

2 disordered regions span residues 75-125 (GSNP…PQRK) and 259-289 (TPLASSGFSPGGQSAAPQGHLPATPQGVTAW). The segment at residues 123 to 182 (QRKSRVLFSQAQVLALERRFKQQRYLTAPEREHLASALQLTSTQVKIWFQNRRYKSKSQR) is a DNA-binding region (homeobox). The span at 261–274 (LASSGFSPGGQSAA) shows a compositional bias: polar residues.

Belongs to the NK-2 homeobox family. Not detected in any neonate or adult tissues.

It is found in the nucleus. Acts as a transcriptional activator. In conjunction with NKX2-5, may play a role in both pharyngeal and cardiac embryonic development. The polypeptide is Homeobox protein Nkx-2.6 (Nkx2-6) (Mus musculus (Mouse)).